The primary structure comprises 625 residues: Pyriculol/pyriculariol biosynthesis cluster transcription factor 1 (625 aa).

Disordered regions lie at residues 1–83 and 466–496; these read MATE…ATQD and PMSA…LPAS. Residues 46–59 are compositionally biased toward low complexity; it reads TPSPSTPANPNSAS. The segment at residues 73 to 132 is a DNA-binding region (homeobox); sequence KNQKRQRATQDQLTTLEQEFAKNPTPTATVRDRIAEEINMTERSVQIWFQNRRAKIKLMA. Residues 467–496 show a composition bias toward polar residues; that stretch reads MSATTAPSPSEYNSPSFFSQAPENTPLPAS.

It localises to the nucleus. In terms of biological role, transcriptional regulator; part of the gene cluster that mediates the biosynthesis of pyriculol and pyriculariol, two heptaketides that induce lesion formation upon application on rice leaves but are dispensable for pathogenicity. With TRF1, negatively regulates the expression of the gene cluster and the subsequent pyriculol and pyriculariol production. The polypeptide is Pyriculol/pyriculariol biosynthesis cluster transcription factor 1 (Pyricularia oryzae (strain 70-15 / ATCC MYA-4617 / FGSC 8958) (Rice blast fungus)).